The chain runs to 388 residues: Flap endonuclease 1 (388 aa).

An N-domain region spans residues Met-1–Arg-104. A Mg(2+)-binding site is contributed by Asp-34. DNA-binding residues include Arg-47 and Arg-70. Mg(2+)-binding residues include Asp-86, Glu-158, Glu-160, Asp-179, and Asp-181. The segment at Gln-122–Tyr-253 is I-domain. Glu-158 contacts DNA. DNA contacts are provided by Gly-231 and Asp-233. Asp-233 lines the Mg(2+) pocket. An interaction with PCNA region spans residues Thr-336 to Phe-344. A disordered region spans residues Ala-355–Lys-388.

The protein belongs to the XPG/RAD2 endonuclease family. FEN1 subfamily. Interacts with PCNA. Three molecules of FEN1 bind to one PCNA trimer with each molecule binding to one PCNA monomer. PCNA stimulates the nuclease activity without altering cleavage specificity. It depends on Mg(2+) as a cofactor. Post-translationally, phosphorylated. Phosphorylation upon DNA damage induces relocalization to the nuclear plasma.

Its subcellular location is the nucleus. The protein resides in the nucleolus. The protein localises to the nucleoplasm. It localises to the mitochondrion. In terms of biological role, structure-specific nuclease with 5'-flap endonuclease and 5'-3' exonuclease activities involved in DNA replication and repair. During DNA replication, cleaves the 5'-overhanging flap structure that is generated by displacement synthesis when DNA polymerase encounters the 5'-end of a downstream Okazaki fragment. It enters the flap from the 5'-end and then tracks to cleave the flap base, leaving a nick for ligation. Also involved in the long patch base excision repair (LP-BER) pathway, by cleaving within the apurinic/apyrimidinic (AP) site-terminated flap. Acts as a genome stabilization factor that prevents flaps from equilibrating into structures that lead to duplications and deletions. Also possesses 5'-3' exonuclease activity on nicked or gapped double-stranded DNA, and exhibits RNase H activity. Also involved in replication and repair of rDNA and in repairing mitochondrial DNA. This chain is Flap endonuclease 1, found in Drosophila grimshawi (Hawaiian fruit fly).